The sequence spans 152 residues: Proteolipid protein 2 (152 aa).

Residues 19–138 (FSRTKKGILL…DAYITFPLKQ (120 aa)) form the MARVEL domain. 4 helical membrane-spanning segments follow: residues 25 to 45 (GILL…FSAS), 48 to 68 (SAYS…LVFY), 85 to 105 (DFFR…VVLV), and 112 to 132 (RVVA…DAYI).

It localises to the membrane. May play a role in cell differentiation in the intestinal epithelium. The protein is Proteolipid protein 2 (Plp2) of Mus musculus (Mouse).